We begin with the raw amino-acid sequence, 175 residues long: RNA pyrophosphohydrolase (175 aa).

Residues 8–159 (PYRTCVGMML…KRPVYERVVK (152 aa)) form the Nudix hydrolase domain. The Nudix box signature appears at 47 to 68 (GGVDPGEDPWTAAKRELYEETS).

This sequence belongs to the Nudix hydrolase family. RppH subfamily. It depends on a divalent metal cation as a cofactor.

Functionally, accelerates the degradation of transcripts by removing pyrophosphate from the 5'-end of triphosphorylated RNA, leading to a more labile monophosphorylated state that can stimulate subsequent ribonuclease cleavage. The chain is RNA pyrophosphohydrolase from Rhodopseudomonas palustris (strain BisB18).